Reading from the N-terminus, the 107-residue chain is uncharacterized protein (107 aa).

2 consecutive transmembrane segments (helical) span residues 14 to 34 and 68 to 88; these read YLAE…IVAW and FFVF…LVPI.

Its subcellular location is the cell membrane. This is an uncharacterized protein from Haemophilus influenzae (strain ATCC 51907 / DSM 11121 / KW20 / Rd).